A 141-amino-acid polypeptide reads, in one-letter code: Hemoglobin subunit alpha-1 (141 aa).

Residues 1–141 (VLSAADKGNV…VSTVLTSKYR (141 aa)) enclose the Globin domain. Histidine 58 is an O2 binding site. Histidine 87 is a heme b binding site.

The protein belongs to the globin family. Heterotetramer of two alpha chains and two beta chains. In terms of tissue distribution, red blood cells.

Functionally, involved in oxygen transport from the lung to the various peripheral tissues. In Bos mutus grunniens (Wild yak), this protein is Hemoglobin subunit alpha-1.